The chain runs to 334 residues: Holliday junction branch migration complex subunit RuvB (334 aa).

The segment at 4-184 is large ATPase domain (RuvB-L); the sequence is ADRLIQPQDL…FGIPLRLEFY (181 aa). ATP contacts are provided by residues R24, G65, K68, T69, T70, 131-133, R174, Y184, and R221; that span reads EDY. T69 serves as a coordination point for Mg(2+). The tract at residues 185-255 is small ATPAse domain (RuvB-S); the sequence is NVRDLSSIVA…VAQSALDLLD (71 aa). A head domain (RuvB-H) region spans residues 258–334; it reads SEGFDYMDRK…YSHFDLIKPD (77 aa). R294, R313, and R318 together coordinate DNA.

The protein belongs to the RuvB family. Homohexamer. Forms an RuvA(8)-RuvB(12)-Holliday junction (HJ) complex. HJ DNA is sandwiched between 2 RuvA tetramers; dsDNA enters through RuvA and exits via RuvB. An RuvB hexamer assembles on each DNA strand where it exits the tetramer. Each RuvB hexamer is contacted by two RuvA subunits (via domain III) on 2 adjacent RuvB subunits; this complex drives branch migration. In the full resolvosome a probable DNA-RuvA(4)-RuvB(12)-RuvC(2) complex forms which resolves the HJ.

It localises to the cytoplasm. The catalysed reaction is ATP + H2O = ADP + phosphate + H(+). Functionally, the RuvA-RuvB-RuvC complex processes Holliday junction (HJ) DNA during genetic recombination and DNA repair, while the RuvA-RuvB complex plays an important role in the rescue of blocked DNA replication forks via replication fork reversal (RFR). RuvA specifically binds to HJ cruciform DNA, conferring on it an open structure. The RuvB hexamer acts as an ATP-dependent pump, pulling dsDNA into and through the RuvAB complex. RuvB forms 2 homohexamers on either side of HJ DNA bound by 1 or 2 RuvA tetramers; 4 subunits per hexamer contact DNA at a time. Coordinated motions by a converter formed by DNA-disengaged RuvB subunits stimulates ATP hydrolysis and nucleotide exchange. Immobilization of the converter enables RuvB to convert the ATP-contained energy into a lever motion, pulling 2 nucleotides of DNA out of the RuvA tetramer per ATP hydrolyzed, thus driving DNA branch migration. The RuvB motors rotate together with the DNA substrate, which together with the progressing nucleotide cycle form the mechanistic basis for DNA recombination by continuous HJ branch migration. Branch migration allows RuvC to scan DNA until it finds its consensus sequence, where it cleaves and resolves cruciform DNA. The sequence is that of Holliday junction branch migration complex subunit RuvB from Shewanella amazonensis (strain ATCC BAA-1098 / SB2B).